A 353-amino-acid chain; its full sequence is UDP-N-acetylglucosamine--N-acetylmuramyl-(pentapeptide) pyrophosphoryl-undecaprenol N-acetylglucosamine transferase (353 aa).

UDP-N-acetyl-alpha-D-glucosamine-binding positions include 10–12 (TGG), Asn-124, Ser-183, and Gln-283.

It belongs to the glycosyltransferase 28 family. MurG subfamily.

The protein resides in the cell inner membrane. The catalysed reaction is di-trans,octa-cis-undecaprenyl diphospho-N-acetyl-alpha-D-muramoyl-L-alanyl-D-glutamyl-meso-2,6-diaminopimeloyl-D-alanyl-D-alanine + UDP-N-acetyl-alpha-D-glucosamine = di-trans,octa-cis-undecaprenyl diphospho-[N-acetyl-alpha-D-glucosaminyl-(1-&gt;4)]-N-acetyl-alpha-D-muramoyl-L-alanyl-D-glutamyl-meso-2,6-diaminopimeloyl-D-alanyl-D-alanine + UDP + H(+). Its pathway is cell wall biogenesis; peptidoglycan biosynthesis. Its function is as follows. Cell wall formation. Catalyzes the transfer of a GlcNAc subunit on undecaprenyl-pyrophosphoryl-MurNAc-pentapeptide (lipid intermediate I) to form undecaprenyl-pyrophosphoryl-MurNAc-(pentapeptide)GlcNAc (lipid intermediate II). This Helicobacter acinonychis (strain Sheeba) protein is UDP-N-acetylglucosamine--N-acetylmuramyl-(pentapeptide) pyrophosphoryl-undecaprenol N-acetylglucosamine transferase.